A 708-amino-acid polypeptide reads, in one-letter code: MSLPAISLYTSPPPGAVYSSEFDPSSRGSSPPCSTAPPSTSHRPPAAAGGLSCLFSSPAAAASPPRAPPHDELGALWQDRSDEPAFAGGGGGYSSSPLKWRDLHHHHHHSPVSVFQGPSSSPAASRSPPASWLAGRDRDRERLFAGFVRNALGSCVDYAPALSPRSEVGGGELAFELDENLAEASPACEPCARELLAGAQARHRIFHEELVVKTFFEAEKAHRGQTRASGDPYLQHCVETAVLLANIGANSTVVSAGLLHDTIDDSFIDYDHIFHMFGAGVADLVEGVSKLSHLSKLARDNNTASRIVEADRLHTMLLAMADARAVLIKLADRVHNMKTLEALPLGKQQRFAKETMEIFVPLANRLGIASWKDQLENLCFKHLNPEEHKDLSSKLTKSFDEVLITSAVDKLDRGLRDAGLSYHNLSGRHKSLYSIHNKMLKKNLTMDEIHDIHGLRLVFEKEEDCYRALDVVHELWPQVPGRFKDYISRPKLNGYRSLHTVVMSENVHPFEVQIRTKEMHLQAEYGFAAHWRYKEGTCRHSFVLQMVEWARWVLTWQCEAMNKERPASLGDSDAIRPPCPFPMHSEDCPYSYTRQCDHDGPIFVILLEHDKMSVQEFQANSTVMNLMDRVGTNTPRWSPYRIPMKEDLRPKVNHEPISDLNRKLSMGDVVELTPALPHESLPNYREEIQRMYDRGGFALATRGGSSRR.

2 disordered regions span residues 1–50 and 109–134; these read MSLP…AAGG and HSPV…SWLA. The transit peptide at 1–58 directs the protein to the chloroplast; it reads MSLPAISLYTSPPPGAVYSSEFDPSSRGSSPPCSTAPPSTSHRPPAAAGGLSCLFSSP. 2 stretches are compositionally biased toward low complexity: residues 29 to 41 and 118 to 131; these read SSPP…PSTS and PSSS…PPAS. Residues 233-337 form the HD domain; that stretch reads YLQHCVETAV…IKLADRVHNM (105 aa).

The protein belongs to the RelA/SpoT family.

It is found in the plastid. It localises to the chloroplast. The enzyme catalyses GTP + ATP = guanosine 3'-diphosphate 5'-triphosphate + AMP. In terms of biological role, probable ppGpp (guanosine 3'-diphosphate 5'-diphosphate) synthetase that may be involved in a rapid plant ppGpp-mediated response to pathogens and other stresses. This is Probable GTP diphosphokinase RSH3, chloroplastic (RSH3) from Oryza sativa subsp. japonica (Rice).